The primary structure comprises 405 residues: Glucose-1-phosphate adenylyltransferase (405 aa).

Alpha-D-glucose 1-phosphate-binding positions include Y99, G164, 179-180 (EK), and S197.

This sequence belongs to the bacterial/plant glucose-1-phosphate adenylyltransferase family. As to quaternary structure, homotetramer.

The catalysed reaction is alpha-D-glucose 1-phosphate + ATP + H(+) = ADP-alpha-D-glucose + diphosphate. Its pathway is glycan biosynthesis; glycogen biosynthesis. Its function is as follows. Involved in the biosynthesis of ADP-glucose, a building block required for the elongation reactions to produce glycogen. Catalyzes the reaction between ATP and alpha-D-glucose 1-phosphate (G1P) to produce pyrophosphate and ADP-Glc. This is Glucose-1-phosphate adenylyltransferase from Corynebacterium aurimucosum (strain ATCC 700975 / DSM 44827 / CIP 107346 / CN-1) (Corynebacterium nigricans).